We begin with the raw amino-acid sequence, 707 residues long: SPX domain-containing membrane protein At4g11810 (707 aa).

The 144-residue stretch at 2–145 folds into the SPX domain; sequence VAFGKKLKER…GYRFTNYYVK (144 aa). The next 6 membrane-spanning stretches (helical) occupy residues 252–272, 283–303, 320–340, 342–361, 380–400, and 416–436; these read FMSL…TYII, LGAA…AQLF, LIFS…AYDF, SLAL…ARAV, AGFV…AGLL, and LPGW…AISF. Residues 481 to 498 show a composition bias toward acidic residues; it reads EETEHDEEDDGDGSEESS. Residues 481–503 form a disordered region; it reads EETEHDEEDDGDGSEESSDDSRK. 5 consecutive transmembrane segments (helical) span residues 523 to 543, 557 to 577, 586 to 606, 614 to 634, and 679 to 699; these read LLIY…SSVV, IFLF…GSYI, ILLA…HVVI, VISG…NLSL, and MLLN…ILAT.

This sequence belongs to the major facilitator superfamily.

It is found in the membrane. The protein is SPX domain-containing membrane protein At4g11810 of Arabidopsis thaliana (Mouse-ear cress).